Consider the following 434-residue polypeptide: MKRNRLSFMNKVLLSSPAVKQPRLGCCSPLSQAHMRAARLDWGSLPHRVVLCVFQYLPLIDRARASSVCRRWNEVFHIPDLWRKFEFELNQSATSYFNSTHPDLIQQIIKKHAAHLQYVSFKVDSSTESAEAACGILSQLVNCSTQTLGLISTAKPSFMTMSKSHFVSALTVLFVNSKSLSSIKIEDTPVDDPSLSILVANNSDTLRRLKMSSCPHVSSDGILCVADHCQGLRELALNYYMLSDELLLALSNETHVNLEHLRIDVVSENPGQIEFHSIKRQSWDALIKHSPGVNVVMYFFLYEEEMETFFKEETPVTHLYFGRSVSKGILGRLSLNCPRLVELVVCANGIQVIDNELICIAEHCKNLTALGLSECEVSCTAFIEFVRLCGRKLTHLSIMEDVLIPDDVCSLDEIHTEVSKYLGRIWFPDVMPVW.

An F-box domain is found at 39–85 (RLDWGSLPHRVVLCVFQYLPLIDRARASSVCRRWNEVFHIPDLWRKF). LRR repeat units follow at residues 140 to 165 (LVNCSTQTLGLISTAKPSFMTMSKSH), 187 to 213 (DTPVDDPSLSILVANNSDTLRRLKMSS), 214 to 239 (CPHVSSDGILCVADHCQGLRELALNY), 242 to 265 (LSDELLLALSNETHVNLEHLRIDV), 322 to 347 (GRSVSKGILGRLSLNCPRLVELVVCA), 349 to 374 (GIQVIDNELICIAEHCKNLTALGLSE), and 375 to 400 (CEVSCTAFIEFVRLCGRKLTHLSIME).

Part of the SCF (SKP1-CUL1-F-box) E3 ubiquitin-protein ligase complex SCF(FBXL21) composed of CUL1, SKP1, RBX1 and FBXL21. Interacts with CRY2. Interacts with CRY1. Expressed in the adenohypophysis, hypothalamus (especially in the suprachiasmatic nucleus or nuclei, SCN) and pineal, all neuroendocrine structures associated with timing and homeostasis.

The protein localises to the cytoplasm. It localises to the cytosol. The protein resides in the nucleus. It functions in the pathway protein modification; protein ubiquitination. Functionally, substrate-recognition component of the SCF(FBXL21) E3 ubiquitin ligase complex involved in circadian rhythm function. Plays a key role in the maintenance of both the speed and the robustness of the circadian clock oscillation. The SCF(FBXL21) complex mainly acts in the cytosol and mediates ubiquitination of CRY proteins (CRY1 and CRY2), leading to CRY proteins stabilization. The SCF(FBXL21) complex counteracts the activity of the SCF(FBXL3) complex and protects CRY proteins from degradation. Involved in the hypothalamic suprachiasmatic nucleus (SCN) clock regulating temporal organization of the daily activities. This Ovis aries (Sheep) protein is F-box/LRR-repeat protein 21 (Fbxl21).